The sequence spans 100 residues: Small ribosomal subunit protein uS14c (100 aa).

This sequence belongs to the universal ribosomal protein uS14 family. As to quaternary structure, part of the 30S ribosomal subunit.

The protein resides in the plastid. Functionally, binds 16S rRNA, required for the assembly of 30S particles. This chain is Small ribosomal subunit protein uS14c (rps14), found in Cuscuta reflexa (Southern Asian dodder).